The following is a 120-amino-acid chain: Large ribosomal subunit protein uL18 (120 aa).

The protein belongs to the universal ribosomal protein uL18 family. As to quaternary structure, part of the 50S ribosomal subunit; part of the 5S rRNA/L5/L18/L25 subcomplex. Contacts the 5S and 23S rRNAs.

This is one of the proteins that bind and probably mediate the attachment of the 5S RNA into the large ribosomal subunit, where it forms part of the central protuberance. The chain is Large ribosomal subunit protein uL18 from Exiguobacterium sp. (strain ATCC BAA-1283 / AT1b).